A 379-amino-acid polypeptide reads, in one-letter code: MKCAYFDANQCLSCRHLKTPLSDQVAAKTATLAALLKDLSVEQWLPPVVGPESGFRNKAKMVVLGAAHQPILGLVSPSGEAVSLCDCSLYPQDMQQLLHRLEAFVRQAGIPPYRVDKAKGELKFILLTRSQVRGEYMLRFVMRSEQAIPRIERELPRLLAEHPEIKVVSVNLQPVHMAILEGEEEIFLTEATRLEEEFNGVPLYIRPKSFFQTHPEVAAKLYLSARKWTRELAPTSIWDLFCGVGGFGLHCASKEVALTGIEIEAEAIACAKMSAETLGLDKVRFTALDSTSFASDSRGEEKPELIIVNPPRRGIGEALCHSLSEFAPKAILYSSCNPKTLAKDLHCISGYRVTKVQLFDMFPHTDHFEVLVMLQRIGE.

[4Fe-4S] cluster-binding residues include cysteine 3, cysteine 11, cysteine 14, and cysteine 87. S-adenosyl-L-methionine is bound by residues glutamine 212, phenylalanine 241, glutamate 262, and asparagine 309. The active-site Nucleophile is cysteine 336.

Belongs to the class I-like SAM-binding methyltransferase superfamily. RNA M5U methyltransferase family. RlmC subfamily.

The enzyme catalyses uridine(747) in 23S rRNA + S-adenosyl-L-methionine = 5-methyluridine(747) in 23S rRNA + S-adenosyl-L-homocysteine + H(+). Catalyzes the formation of 5-methyl-uridine at position 747 (m5U747) in 23S rRNA. The sequence is that of 23S rRNA (uracil(747)-C(5))-methyltransferase RlmC from Shewanella loihica (strain ATCC BAA-1088 / PV-4).